Consider the following 181-residue polypeptide: Large ribosomal subunit protein uL5 (181 aa).

Belongs to the universal ribosomal protein uL5 family. Part of the 50S ribosomal subunit; part of the 5S rRNA/L5/L18/L25 subcomplex. Contacts the 5S rRNA and the P site tRNA. Forms a bridge to the 30S subunit in the 70S ribosome.

Functionally, this is one of the proteins that bind and probably mediate the attachment of the 5S RNA into the large ribosomal subunit, where it forms part of the central protuberance. In the 70S ribosome it contacts protein S13 of the 30S subunit (bridge B1b), connecting the 2 subunits; this bridge is implicated in subunit movement. Contacts the P site tRNA; the 5S rRNA and some of its associated proteins might help stabilize positioning of ribosome-bound tRNAs. The chain is Large ribosomal subunit protein uL5 from Campylobacter hominis (strain ATCC BAA-381 / DSM 21671 / CCUG 45161 / LMG 19568 / NCTC 13146 / CH001A).